The sequence spans 134 residues: MRSVLTISAGLLFGLALSSVAHANDHKILGVIAMPRNETNDLALKIPVCRIVKRIQLTADHGDIELSGASVYFKTARSASQSLNVPSSIKEGQTTGWININSDNDNKRCVSKITFSGHTVNSSDMARLKVIGDD.

An N-terminal signal peptide occupies residues 1–23 (MRSVLTISAGLLFGLALSSVAHA).

This sequence belongs to the UPF0412 family.

This is UPF0412 protein YaaI from Salmonella agona (strain SL483).